We begin with the raw amino-acid sequence, 618 residues long: Proline--tRNA ligase (618 aa).

This sequence belongs to the class-II aminoacyl-tRNA synthetase family. ProS type 1 subfamily. As to quaternary structure, homodimer.

The protein resides in the cytoplasm. The catalysed reaction is tRNA(Pro) + L-proline + ATP = L-prolyl-tRNA(Pro) + AMP + diphosphate. Catalyzes the attachment of proline to tRNA(Pro) in a two-step reaction: proline is first activated by ATP to form Pro-AMP and then transferred to the acceptor end of tRNA(Pro). As ProRS can inadvertently accommodate and process non-cognate amino acids such as alanine and cysteine, to avoid such errors it has two additional distinct editing activities against alanine. One activity is designated as 'pretransfer' editing and involves the tRNA(Pro)-independent hydrolysis of activated Ala-AMP. The other activity is designated 'posttransfer' editing and involves deacylation of mischarged Ala-tRNA(Pro). The misacylated Cys-tRNA(Pro) is not edited by ProRS. This chain is Proline--tRNA ligase, found in Streptococcus pyogenes serotype M3 (strain ATCC BAA-595 / MGAS315).